A 101-amino-acid polypeptide reads, in one-letter code: Small ribosomal subunit protein uS14 (101 aa).

Basic and acidic residues predominate over residues 1–11 (MAKKSAIETNE). The interval 1–24 (MAKKSAIETNERRRKLSQSKAAKR) is disordered. Residues 12–24 (RRRKLSQSKAAKR) are compositionally biased toward basic residues.

It belongs to the universal ribosomal protein uS14 family. As to quaternary structure, part of the 30S ribosomal subunit. Contacts proteins S3 and S10.

In terms of biological role, binds 16S rRNA, required for the assembly of 30S particles and may also be responsible for determining the conformation of the 16S rRNA at the A site. This is Small ribosomal subunit protein uS14 from Azorhizobium caulinodans (strain ATCC 43989 / DSM 5975 / JCM 20966 / LMG 6465 / NBRC 14845 / NCIMB 13405 / ORS 571).